The chain runs to 76 residues: Kappa-scoloptoxin(15)-Ssd3a (76 aa).

Positions 1–23 (MEGKIIFICFLVVLLTLPELISS) are cleaved as a signal peptide.

Contains 2 disulfide bonds. In terms of tissue distribution, expressed by the venom gland.

It localises to the secreted. Functionally, acts as a voltage-gated potassium channel inhibitor. In Scolopendra dehaani (Thai centipede), this protein is Kappa-scoloptoxin(15)-Ssd3a.